A 316-amino-acid chain; its full sequence is Leucine-rich repeat-containing protein 73 (316 aa).

LRR repeat units follow at residues 57-78, 86-106, 114-137, 145-166, 174-187, 202-223, and 231-250; these read SLAQ…KQLA, SIQS…ALLN, ALVA…CGLL, GLKE…SRLA, QVRV…PLGD, TLEV…TLLD, and ALRS…QQQI. The segment at 257-296 is disordered; it reads GEEEEEVAGGAGDTQEWERGREPAAHQRGSSSWMCPSDPS. The span at 272-281 shows a compositional bias: basic and acidic residues; the sequence is EWERGREPAA. A compositionally biased stretch (low complexity) spans 286–296; that stretch reads SSSWMCPSDPS.

The sequence is that of Leucine-rich repeat-containing protein 73 (LRRC73) from Homo sapiens (Human).